The chain runs to 1041 residues: FHIP family protein CG3558 (1041 aa).

Serine 490 is modified (phosphoserine). 5 disordered regions span residues 619–648 (RPADEESEATDTTVATTASEADMDHNSSSL), 792–818 (KGNEGSPMHHSQQQQMVTNSGQQQGQL), 858–879 (SMFSRKSASTSTAPPNGSSASS), 903–947 (DGRG…SNSS), and 959–986 (SNTTTHSASTLHGLDGGPSTGGFNSEPA). A compositionally biased stretch (polar residues) spans 628–637 (TDTTVATTAS). Phosphoserine is present on serine 797. The span at 800-818 (HHSQQQQMVTNSGQQQGQL) shows a compositional bias: polar residues. The segment covering 903 to 925 (DGRGISQAQTSAGTCETSLSTQP) has biased composition (polar residues). Low complexity predominate over residues 927-947 (AGASRTGANATSTAASGSNSS). Polar residues predominate over residues 959–968 (SNTTTHSAST).

Belongs to the FHIP family.

The sequence is that of FHIP family protein CG3558 from Drosophila melanogaster (Fruit fly).